The sequence spans 369 residues: uncharacterized protein (369 aa).

Residues 1-35 (MQTNNPSYFFRSESALQDEKRKEEKSHNPNGNPRN) form a disordered region. Positions 17–27 (QDEKRKEEKSH) are enriched in basic and acidic residues. WD repeat units lie at residues 83 to 127 (GHSG…CVET), 130 to 169 (GHTD…SRLL), 174 to 213 (GHSR…GSQL), 220 to 260 (GHQS…HEET), 263 to 301 (EHPD…VKDI), and 304 to 341 (GHYE…DNNE).

This is an uncharacterized protein from Schizosaccharomyces pombe (strain 972 / ATCC 24843) (Fission yeast).